The sequence spans 105 residues: uncharacterized protein (105 aa).

The next 3 helical transmembrane spans lie at 14–34, 41–61, and 80–100; these read ILLM…IVAW, ETVC…FAFL, and VGFT…IFTI.

The protein resides in the cell membrane. This is an uncharacterized protein from Treponema pallidum (strain Nichols).